The chain runs to 627 residues: Putative polyketide hydroxylase (627 aa).

FAD is bound by residues 22 to 51 and 309 to 319; these read PVLV…LVER and YRSGRVLLAGD. The disordered stretch occupies residues 370 to 469; that stretch reads AEATSARAAH…GGGPGGGGPQ (100 aa). Gly residues predominate over residues 395–469; the sequence is AGGGGPGAGT…GGGPGGGGPQ (75 aa).

The protein belongs to the PheA/TfdB FAD monooxygenase family. FAD is required as a cofactor.

Functionally, involved in developmentally regulated synthesis of a compound biosynthetically related to polyketide antibiotics which is essential for spore color in Streptococcus coelicolor. This is Putative polyketide hydroxylase from Streptomyces coelicolor (strain ATCC BAA-471 / A3(2) / M145).